The following is a 511-amino-acid chain: TNF receptor-associated factor family protein DDB_G0290931 (511 aa).

The RING-type; degenerate zinc-finger motif lies at 27–67 (CPICFELIYKKSIYQCSSGHYACQECWEKSLEIKQECMICR). The stretch at 103 to 169 (IDGANQENED…RKLIKDEENG (67 aa)) forms a coiled coil. The interval 107–159 (NQENEDEENEDEENEDDEDENEDEENGEDDEDKDEDEENENENEENKDEENEK) is disordered. A compositionally biased stretch (acidic residues) spans 109 to 155 (ENEDEENEDEENEDDEDENEDEENGEDDEDKDEDEENENENEENKDE). 2 consecutive TRAF-type zinc fingers follow at residues 181–234 (RHIQ…QVQL) and 236–293 (NHYD…SELQ). A coiled-coil region spans residues 324-358 (ELLLKEIEKSKITCSELQRKNDELSSLITEIDDNY). The region spanning 374 to 499 (GYTNKWIISN…DDKLTINIYV (126 aa)) is the MATH domain.

This sequence belongs to the TNF receptor-associated factor family. A subfamily.

It localises to the cytoplasm. In terms of biological role, probable adapter protein and signal transducer that links members of the tumor necrosis factor receptor family to different signaling pathways by association with the receptor cytoplasmic domain and kinases. The polypeptide is TNF receptor-associated factor family protein DDB_G0290931 (Dictyostelium discoideum (Social amoeba)).